Reading from the N-terminus, the 522-residue chain is Acetylcholine receptor subunit delta (522 aa).

An N-terminal signal peptide occupies residues 1–21; the sequence is MGNIHFVYLLISCLYYSGCSG. At 22-245 the chain is on the extracellular side; the sequence is VNEEERLIND…VTFYLIIRRK (224 aa). N-linked (GlcNAc...) asparagine glycosylation is found at asparagine 91, asparagine 164, and asparagine 229. Cysteine 151 and cysteine 165 are disulfide-bonded. The next 3 membrane-spanning stretches (helical) occupy residues 246–270, 278–295, and 312–333; these read PLFY…AFYL, MSTA…LLLT, and YLMF…VLNF. Over 334 to 476 the chain is Cytoplasmic; the sequence is HFRTPSTHVL…WNLVGQTIDR (143 aa). Tyrosine 393 is subject to Phosphotyrosine; by Tyr-kinases. Residues 477–497 traverse the membrane as a helical segment; the sequence is LSMFIITPVMVLGTIFIFVMG.

Belongs to the ligand-gated ion channel (TC 1.A.9) family. Acetylcholine receptor (TC 1.A.9.1) subfamily. In terms of assembly, pentamer of two alpha chains, and one each of the beta, delta, and gamma chains.

It localises to the postsynaptic cell membrane. The protein localises to the cell membrane. It catalyses the reaction K(+)(in) = K(+)(out). The enzyme catalyses Na(+)(in) = Na(+)(out). Its function is as follows. After binding acetylcholine, the AChR responds by an extensive change in conformation that affects all subunits and leads to opening of an ion-conducting channel across the plasma membrane. This is Acetylcholine receptor subunit delta (chrnd) from Tetronarce californica (Pacific electric ray).